Reading from the N-terminus, the 1385-residue chain is Coiled-coil domain-containing protein 7 (1385 aa).

A coiled-coil region spans residues 299-330; that stretch reads LDAEYKQMQCDFQLLSEEKLVLENELQKLKDK. Positions 329 to 364 are disordered; it reads DKEKTKPTNNRTKKAVKTVKKKDKGKSEDSEKKMSP. Residues 339–352 show a composition bias toward basic residues; the sequence is RTKKAVKTVKKKDK. A compositionally biased stretch (basic and acidic residues) spans 353–364; that stretch reads GKSEDSEKKMSP. A coiled-coil region spans residues 374-411; it reads LDQVQKVARLEIENKVLQEQLKQALQEAEKAKHQLNYF. Disordered regions lie at residues 422-545, 572-752, and 809-834; these read GKTE…SKEV, TESK…EPNE, and TKKL…LKHQ. Polar residues predominate over residues 425 to 436; that stretch reads ETTMQVGNSQTK. 2 stretches are compositionally biased toward basic and acidic residues: residues 437-455 and 481-490; these read VKGE…RKSL and LIEKSSEKKR. 3 stretches are compositionally biased toward polar residues: residues 493-503, 511-528, and 536-545; these read PAISDLSQILK, LESS…YKSP, and LTTVSSSKEV. A compositionally biased stretch (basic and acidic residues) spans 573 to 589; sequence ESKKADVSEEQLQKMTE. Residues 654–664 are compositionally biased toward polar residues; that stretch reads RIQSETKNLKA. Composition is skewed to basic and acidic residues over residues 665-676 and 685-697; these read TRNESFHSHNDV and QDTK…EVKK. Positions 701–711 are enriched in polar residues; sequence FQDNQLSTHNE. The span at 712-726 shows a compositional bias: basic and acidic residues; sequence VPNERLVVEHQESLS.

In terms of tissue distribution, expressed in epithelium of normal cervix and cervical cancer. Overexpressed in early and interim cervical cancer.

Functionally, may play a role in tumorigenesis. This is Coiled-coil domain-containing protein 7 (CCDC7) from Homo sapiens (Human).